A 345-amino-acid polypeptide reads, in one-letter code: Tetraacyldisaccharide 4'-kinase (345 aa).

54-61 lines the ATP pocket; sequence TLGGAGKT.

It belongs to the LpxK family.

The enzyme catalyses a lipid A disaccharide + ATP = a lipid IVA + ADP + H(+). Its pathway is glycolipid biosynthesis; lipid IV(A) biosynthesis; lipid IV(A) from (3R)-3-hydroxytetradecanoyl-[acyl-carrier-protein] and UDP-N-acetyl-alpha-D-glucosamine: step 6/6. Functionally, transfers the gamma-phosphate of ATP to the 4'-position of a tetraacyldisaccharide 1-phosphate intermediate (termed DS-1-P) to form tetraacyldisaccharide 1,4'-bis-phosphate (lipid IVA). In Allorhizobium ampelinum (strain ATCC BAA-846 / DSM 112012 / S4) (Agrobacterium vitis (strain S4)), this protein is Tetraacyldisaccharide 4'-kinase.